The following is a 491-amino-acid chain: Cytochrome P450 2H1 (491 aa).

Cysteine 436 provides a ligand contact to heme.

Belongs to the cytochrome P450 family. It depends on heme as a cofactor. Expressed in liver.

Its subcellular location is the endoplasmic reticulum membrane. It localises to the microsome membrane. The enzyme catalyses an organic molecule + reduced [NADPH--hemoprotein reductase] + O2 = an alcohol + oxidized [NADPH--hemoprotein reductase] + H2O + H(+). Functionally, cytochromes P450 are a group of heme-thiolate monooxygenases. In liver microsomes, this enzyme is involved in an NADPH-dependent electron transport pathway. It oxidizes a variety of structurally unrelated compounds, including steroids, fatty acids, and xenobiotics. This is Cytochrome P450 2H1 (CYP2H1) from Gallus gallus (Chicken).